The sequence spans 551 residues: Cytochrome c oxidase subunit 1 homolog (551 aa).

Helical transmembrane passes span 14-34 (GELG…VVAA), 40-60 (EYAF…FVIG), and 88-108 (VGTL…VIIA). His-132 is a binding site for heme b. 8 consecutive transmembrane segments (helical) span residues 133–153 (TSAV…FYVV), 169–189 (FVVL…LLGI), 202–222 (ADLW…GTVL), 229–249 (IYVA…LHLG), 280–300 (GHNA…YYFI), 313–333 (LSIV…PHHL), 345–365 (LGMT…INGL), and 383–403 (MMVV…MMSV). The Cu cation site is built by His-281, His-331, and His-332. His-419 and His-421 together coordinate heme b. The next 3 helical transmembrane spans lie at 424–444 (ALGW…PWLW), 459–479 (FWVS…AGIL), and 513–533 (IGGI…FMTI).

Belongs to the heme-copper respiratory oxidase family. It depends on Cu(2+) as a cofactor. Heme b serves as cofactor.

The protein resides in the cell membrane. It carries out the reaction 4 Fe(II)-[cytochrome c] + O2 + 8 H(+)(in) = 4 Fe(III)-[cytochrome c] + 2 H2O + 4 H(+)(out). Its pathway is energy metabolism; oxidative phosphorylation. Its function is as follows. Cytochrome c oxidase is the component of the respiratory chain that catalyzes the reduction of oxygen to water. Subunits 1-3 form the functional core of the enzyme complex. Co I is the catalytic subunit of the enzyme. Electrons originating in cytochrome c or a quinol are transferred to the bimetallic center formed by a high-spin heme and copper B. This chain is Cytochrome c oxidase subunit 1 homolog (fixN), found in Azorhizobium caulinodans (strain ATCC 43989 / DSM 5975 / JCM 20966 / LMG 6465 / NBRC 14845 / NCIMB 13405 / ORS 571).